The chain runs to 291 residues: Small ribosomal subunit protein uS2 (291 aa).

The disordered stretch occupies residues 255–291 (AGAATGEWSEAQGAQWETGTGAPAADWAAEPAKESSW).

It belongs to the universal ribosomal protein uS2 family. Component of the small ribosomal subunit. Mature ribosomes consist of a small (40S) and a large (60S) subunit. The 40S subunit contains about 33 different proteins and 1 molecule of RNA (18S). The 60S subunit contains about 49 different proteins and 3 molecules of RNA (25S, 5.8S and 5S). Interacts with RPS21.

Its subcellular location is the cytoplasm. Its function is as follows. Required for the assembly and/or stability of the 40S ribosomal subunit. Required for the processing of the 20S rRNA-precursor to mature 18S rRNA in a late step of the maturation of 40S ribosomal subunits. This is Small ribosomal subunit protein uS2 from Podospora anserina (strain S / ATCC MYA-4624 / DSM 980 / FGSC 10383) (Pleurage anserina).